We begin with the raw amino-acid sequence, 436 residues long: MGQVLPLVTRQGDRIAIVSGLRTPFARQATAFHGIPAVDLGKMVVGELLARSEIPAEVIEQLVFGQVVQMPEAPNIAREIVLGTGMNVHTDAYSVSRACATSFQAVANVAESLMAGTIRAGIAGGADSSSVLPIGVSKKLARVLVDVNKARTMSQRLKLFSRLRLRDLMPVPPAVAEYSTGLRMGDTAEQMAKTYGITREQQDALAHRSHQRAAQAWSDGKLKEEVMTAFIPPYKQPLVEDNNIRGNSSLADYAKLRPAFDRKHGTVTAANSTPLTDGAAAVILMTESRAKELGLVPLGYLRSYAFTAIDVWQDMLFGPAWSTPLALERAGLTMSDLTLIDMHEAFAAQTLANIQLLGSERFAREVLGRAHATGEVDDSKFNVLGGSIAYGHPFAATGARMITQTLHELRRRGGGFGLVTACAAGGLGAAMVLEAE.

The active-site Acyl-thioester intermediate is the cysteine 99. Active-site proton acceptor residues include histidine 392 and cysteine 422.

This sequence belongs to the thiolase-like superfamily. Thiolase family. In terms of assembly, heterotetramer of two alpha chains (FadJ) and two beta chains (FadI).

It localises to the cytoplasm. The catalysed reaction is an acyl-CoA + acetyl-CoA = a 3-oxoacyl-CoA + CoA. It functions in the pathway lipid metabolism; fatty acid beta-oxidation. In terms of biological role, catalyzes the final step of fatty acid oxidation in which acetyl-CoA is released and the CoA ester of a fatty acid two carbons shorter is formed. This is 3-ketoacyl-CoA thiolase from Shigella boydii serotype 18 (strain CDC 3083-94 / BS512).